Reading from the N-terminus, the 907-residue chain is Lateral signaling target protein 2 homolog (907 aa).

Disordered stretches follow at residues 339-395 (SSDN…DPAN), 463-604 (LTDS…SGDA), 662-688 (NSSP…PDPA), 716-756 (EVNA…SENG), and 770-834 (GSGG…EERR). The span at 351 to 361 (DISSFYTSNNR) shows a compositional bias: polar residues. The span at 367 to 393 (EPNEDDDVSESNDEDEDEGEEVDEDDP) shows a compositional bias: acidic residues. 2 stretches are compositionally biased toward polar residues: residues 463 to 475 (LTDS…NPSL) and 486 to 495 (PVTSSHPIAQ). The span at 501 to 516 (SEEEGEVDEYDEDDSE) shows a compositional bias: acidic residues. A compositionally biased stretch (basic residues) spans 525–549 (HHTKHQRRHRHHHHHHRKHYSKHRS). The span at 550-565 (SAAGSAGTSGTTCSAA) shows a compositional bias: low complexity. The segment covering 568–580 (QISSCDTSPSSGG) has biased composition (polar residues). Positions 592–602 (GSSGNSSGGSG) are enriched in gly residues. Residues 742–751 (APRTMMTTAA) are compositionally biased toward polar residues. A compositionally biased stretch (low complexity) spans 777 to 793 (GSSRSSQERSVSLSETS). The segment covering 816–826 (PKSVQSEQSGQ) has biased composition (polar residues). The segment at 845–905 (DGDAPRCMAC…VCRECFVREV (61 aa)) adopts an FYVE-type zinc-finger fold. Zn(2+) is bound by residues C851, C854, C867, C870, C875, C878, C897, and C900.

This sequence belongs to the lst-2 family.

Functionally, negative regulator of epidermal growth factor receptor (EGFR) signaling. This chain is Lateral signaling target protein 2 homolog, found in Culex quinquefasciatus (Southern house mosquito).